The following is a 2329-amino-acid chain: Pre-mRNA-splicing factor 8 homolog (2329 aa).

Residues 1-53 are disordered; sequence MANYGGHPQTEPHAIPDSILEEKSRKWKQLQGKRYSEKKKFGMSDTQKEEMPP. A compositionally biased stretch (basic and acidic residues) spans 34 to 53; that stretch reads RYSEKKKFGMSDTQKEEMPP. The interval 804-1295 is reverse transcriptase homology domain; that stretch reads TTVHWLESRR…KIQTRIKIGL (492 aa). The linker stretch occupies residues 1296-1570; sequence NSKMPSRFPP…TLKISLIQIF (275 aa). Positions 1506 to 1519 are important for branch point selection; the sequence is MKFKKLTNAQRSGL. Residues 1574–1745 form a restriction endonuclease homology domain region; sequence LWQKIHESVV…LRERIRKGLQ (172 aa). The segment at 1760–2013 is RNase H homology domain; sequence NYGELFSNQI…ILGMEISAPS (254 aa). The 132-residue stretch at 2096 to 2227 folds into the MPN domain; the sequence is TYILPKNILK…LTAYKLTPSG (132 aa).

In terms of assembly, part of the U5 snRNP complex and of the U4/U6-U5 tri-snRNP complex.

It is found in the nucleus. In terms of biological role, functions as a scaffold that mediates the ordered assembly of spliceosomal proteins and snRNAs. Required for the assembly of the U4/U6-U5 tri-snRNP complex. Functions as a scaffold that positions spliceosomal U2, U5 and U6 snRNAs at splice sites on pre-mRNA substrates, so that splicing can occur. Interacts with both the 5' and the 3' splice site. The sequence is that of Pre-mRNA-splicing factor 8 homolog (prp-8) from Caenorhabditis elegans.